A 237-amino-acid chain; its full sequence is Phosphoadenosine 5'-phosphosulfate reductase (237 aa).

Cysteine 231 acts as the Nucleophile; cysteine thiosulfonate intermediate in catalysis.

This sequence belongs to the PAPS reductase family. CysH subfamily.

Its subcellular location is the cytoplasm. It carries out the reaction [thioredoxin]-disulfide + sulfite + adenosine 3',5'-bisphosphate + 2 H(+) = [thioredoxin]-dithiol + 3'-phosphoadenylyl sulfate. It participates in sulfur metabolism; hydrogen sulfide biosynthesis; sulfite from sulfate: step 3/3. Functionally, catalyzes the formation of sulfite from phosphoadenosine 5'-phosphosulfate (PAPS) using thioredoxin as an electron donor. This is Phosphoadenosine 5'-phosphosulfate reductase from Xylella fastidiosa (strain M12).